Here is a 1030-residue protein sequence, read N- to C-terminus: Tricorn protease (1030 aa).

The interval 1–270 (MANLLQNPDI…DNVKSLDIGP (270 aa)) is six-bladed beta propeller. The interval 93-94 (RR) is binds the substrate's C-terminus. Positions 286 to 635 (LEDFSMSPGD…EEEKSLNIDA (350 aa)) are seven-bladed beta propeller. The interval 641 to 712 (NVKEDFAEMY…RTSHSYEMGG (72 aa)) is C-1. The active-site Charge relay system is histidine 706. The segment at 721-816 (RAGRIACDFK…SGFVDVLQDD (96 aa)) is PDZ-like. Residues 817 to 1022 (RYIRYRAWVE…IEMVLADLEK (206 aa)) form a C-2 region. Position 877–879 (877–879 (GGG)) interacts with substrate. Serine 926 functions as the Nucleophile in the catalytic mechanism. 954 to 956 (GIS) is a substrate binding site. The Charge relay system role is filled by glutamate 984.

The protein belongs to the peptidase S41B family. Part of the tricorn proteolytic complex.

It is found in the cytoplasm. Its function is as follows. Tricorn degrades oligopeptides in a sequential manner. This Thermoplasma volcanium (strain ATCC 51530 / DSM 4299 / JCM 9571 / NBRC 15438 / GSS1) protein is Tricorn protease (tri).